The primary structure comprises 471 residues: Putative multidrug resistance protein MdtD (471 aa).

The Periplasmic portion of the chain corresponds to 1 to 11 (MTDLPDSTRWQ). A helical transmembrane segment spans residues 12 to 32 (LWIVAFGFFMQSLDTTIVNTA). The Cytoplasmic segment spans residues 33–48 (LPSMAQSLGESPLHMH). A helical membrane pass occupies residues 49-69 (MVIVSYVLTVAVMLPASGWLA). Over 70 to 76 (DKVGVRN) the chain is Periplasmic. Residues 77-97 (IFFTAIVLFTLGSLFCALSGT) form a helical membrane-spanning segment. Topologically, residues 98–101 (LNEL) are cytoplasmic. The chain crosses the membrane as a helical span at residues 102-124 (LLARALQGVGGAMMVPVGRLTVM). Residues 125–137 (KIVPREQYMAAMT) lie on the Periplasmic side of the membrane. Residues 138–158 (FVTLPGQVGPLLGPALGGLLV) traverse the membrane as a helical segment. Over 159-164 (EYASWH) the chain is Cytoplasmic. A helical transmembrane segment spans residues 165 to 185 (WIFLINIPVGIIGAIATLMLM). Topologically, residues 186 to 196 (PNYTMQTRRFD) are periplasmic. The helical transmembrane segment at 197 to 217 (LSGFLLLAVGMAVLTLALDGS) threads the bilayer. Topologically, residues 218–224 (KGTGLSP) are cytoplasmic. The helical transmembrane segment at 225–245 (LAITGLVAVGVVALVLYLLHA) threads the bilayer. The Periplasmic portion of the chain corresponds to 246 to 262 (RNNHRALFSLKLFRTRT). The helical transmembrane segment at 263-283 (FSLGLAGSFAGRIGSGMLPFM) threads the bilayer. Residues 284–285 (TP) lie on the Cytoplasmic side of the membrane. Residues 286–306 (VFLQIGLGFSPFHAGLMMIPM) form a helical membrane-spanning segment. Over 307-341 (VLGSMGMKRIVVQVVNRFGYRRVLVATTLGLSLVT) the chain is Periplasmic. A helical transmembrane segment spans residues 342–362 (LLFMTTALLGWYYVLPFVLFL). At 363 to 395 (QGMVNSTRFSSMNTLTLKDLPDNLASSGNSLLS) the chain is on the cytoplasmic side. A helical transmembrane segment spans residues 396–416 (MIMQLSMSIGVTIAGLLLGLF). Topologically, residues 417 to 430 (GSQHVSVDSGTTQT) are periplasmic. Residues 431–451 (VFMYTWLSMAFIIALPAFIFA) traverse the membrane as a helical segment. At 452-471 (RVPNDTHQNVAISRRKRSAQ) the chain is on the cytoplasmic side.

It belongs to the major facilitator superfamily. TCR/Tet family.

Its subcellular location is the cell inner membrane. In Escherichia coli O127:H6 (strain E2348/69 / EPEC), this protein is Putative multidrug resistance protein MdtD.